The following is a 168-amino-acid chain: Small ribosomal subunit protein uS5 (168 aa).

The S5 DRBM domain maps to 13–76 (LAEKLIAVNR…EKARRNMINV (64 aa)).

The protein belongs to the universal ribosomal protein uS5 family. Part of the 30S ribosomal subunit. Contacts proteins S4 and S8.

With S4 and S12 plays an important role in translational accuracy. Functionally, located at the back of the 30S subunit body where it stabilizes the conformation of the head with respect to the body. This Pseudoalteromonas translucida (strain TAC 125) protein is Small ribosomal subunit protein uS5.